Reading from the N-terminus, the 389-residue chain is Succinate--CoA ligase [ADP-forming] subunit beta (389 aa).

In terms of domain architecture, ATP-grasp spans 9-244; the sequence is KEIFRSMGVA…LDEEDPKEIE (236 aa). ATP is bound by residues Lys-46, 53-55, Glu-99, Cys-102, and Glu-107; that span reads GRG. 2 residues coordinate Mg(2+): Asn-199 and Asp-213. Substrate contacts are provided by residues Asn-264 and 321-323; that span reads GIM.

The protein belongs to the succinate/malate CoA ligase beta subunit family. Heterotetramer of two alpha and two beta subunits. Requires Mg(2+) as cofactor.

It catalyses the reaction succinate + ATP + CoA = succinyl-CoA + ADP + phosphate. The enzyme catalyses GTP + succinate + CoA = succinyl-CoA + GDP + phosphate. The protein operates within carbohydrate metabolism; tricarboxylic acid cycle; succinate from succinyl-CoA (ligase route): step 1/1. Succinyl-CoA synthetase functions in the citric acid cycle (TCA), coupling the hydrolysis of succinyl-CoA to the synthesis of either ATP or GTP and thus represents the only step of substrate-level phosphorylation in the TCA. The beta subunit provides nucleotide specificity of the enzyme and binds the substrate succinate, while the binding sites for coenzyme A and phosphate are found in the alpha subunit. This Macrococcus caseolyticus (strain JCSC5402) (Macrococcoides caseolyticum) protein is Succinate--CoA ligase [ADP-forming] subunit beta.